Consider the following 98-residue polypeptide: NADH-ubiquinone oxidoreductase chain 4L (98 aa).

Helical transmembrane passes span 1 to 21 (MTSI…GVLM), 28 to 48 (STLL…SLLI), and 59 to 79 (APLI…ALLV).

The protein belongs to the complex I subunit 4L family. In terms of assembly, core subunit of respiratory chain NADH dehydrogenase (Complex I) which is composed of 45 different subunits.

Its subcellular location is the mitochondrion inner membrane. It catalyses the reaction a ubiquinone + NADH + 5 H(+)(in) = a ubiquinol + NAD(+) + 4 H(+)(out). Functionally, core subunit of the mitochondrial membrane respiratory chain NADH dehydrogenase (Complex I) which catalyzes electron transfer from NADH through the respiratory chain, using ubiquinone as an electron acceptor. Part of the enzyme membrane arm which is embedded in the lipid bilayer and involved in proton translocation. This Phascolarctos cinereus (Koala) protein is NADH-ubiquinone oxidoreductase chain 4L (MT-ND4L).